The sequence spans 595 residues: GRB2-associated-binding protein 3 (595 aa).

One can recognise a PH domain in the interval 5–117; the sequence is DTVCMGWLIK…WVHSISQVCN (113 aa). The segment at 295 to 339 is disordered; that stretch reads SGVKELNIMSNTPPPRPPKPSYLSEQRQDQPLLTGHSSNKKPGYT. Polar residues predominate over residues 317 to 331; that stretch reads LSEQRQDQPLLTGHS. The residue at position 346 (Ser-346) is a Phosphoserine. Disordered stretches follow at residues 389–408 and 418–463; these read PSAE…SELR and PMSS…QEHT. Polar residues predominate over residues 454 to 463; sequence RNLSTIQEHT. Ser-480 carries the post-translational modification Phosphoserine. The tract at residues 493–513 is disordered; sequence STPSEEEEEEEEEEEEEEEEE. Residues 496-513 are compositionally biased toward acidic residues; that stretch reads SEEEEEEEEEEEEEEEEE.

Belongs to the GAB family. Interacts with PIK3R/p85, SHP2 and GRAP2/MONA. May interact with Grb2. Phosphorylated on tyrosine residue(s) after macrophage colony-stimulating factor (M-CSF) receptor stimulation. Highly expressed in spleen and thymus and weakly in brain, heart, lung, kidney, uterus, and embryonic stem cells. Also expressed in myeloid and macrophage cell lines.

This Mus musculus (Mouse) protein is GRB2-associated-binding protein 3 (Gab3).